A 229-amino-acid chain; its full sequence is Triosephosphate isomerase (229 aa).

9-11 (NYK) contacts substrate. Histidine 93 acts as the Electrophile in catalysis. Glutamate 141 serves as the catalytic Proton acceptor. Substrate contacts are provided by residues isoleucine 146, glycine 180, and 201-202 (AS).

It belongs to the triosephosphate isomerase family. As to quaternary structure, homotetramer; dimer of dimers.

The protein localises to the cytoplasm. It catalyses the reaction D-glyceraldehyde 3-phosphate = dihydroxyacetone phosphate. The protein operates within carbohydrate biosynthesis; gluconeogenesis. It participates in carbohydrate degradation; glycolysis; D-glyceraldehyde 3-phosphate from glycerone phosphate: step 1/1. In terms of biological role, involved in the gluconeogenesis. Catalyzes stereospecifically the conversion of dihydroxyacetone phosphate (DHAP) to D-glyceraldehyde-3-phosphate (G3P). This is Triosephosphate isomerase from Sulfurisphaera tokodaii (strain DSM 16993 / JCM 10545 / NBRC 100140 / 7) (Sulfolobus tokodaii).